Consider the following 241-residue polypeptide: Hybrid peroxiredoxin hyPrx5 (241 aa).

A Thioredoxin domain is found at S3 to Q167. C49 (cysteine sulfenic acid (-SOH) intermediate; for peroxiredoxin activity) is an active-site residue. The region spanning E170 to A241 is the Glutaredoxin domain. A disulfide bridge connects residues C180 and C183.

This sequence in the N-terminal section; belongs to the peroxiredoxin family. Prx5 subfamily. It in the C-terminal section; belongs to the glutaredoxin family. Homotetramer; interconnecting Prx and Grx domains of different monomers.

It carries out the reaction a hydroperoxide + 2 glutathione = an alcohol + glutathione disulfide + H2O. Thiol-specific peroxidase that catalyzes the reduction of hydrogen peroxide and organic hydroperoxides to water and alcohols, respectively. Plays a role in cell protection against oxidative stress by detoxifying peroxides. This Haemophilus influenzae (strain ATCC 51907 / DSM 11121 / KW20 / Rd) protein is Hybrid peroxiredoxin hyPrx5 (PGdx).